Consider the following 46-residue polypeptide: Esculentin-1SEb (46 aa).

C40 and C46 form a disulfide bridge.

Expressed by the skin glands.

It is found in the secreted. Mast cell degranulating peptide. Causes histamine release from rat peritoneal mast cells in vitro. Has antibacterial activity against the Gram-negative bacterium E.coli K12 and Gram-positive bacterium M.luteus NCT C2665. The polypeptide is Esculentin-1SEb (Lithobates sevosus (Dusky gopher frog)).